We begin with the raw amino-acid sequence, 318 residues long: uncharacterized protein (318 aa).

The segment at 19 to 63 is disordered; sequence VPPDARHHEPRPGMTDHPDTGNGIGLTGRPPRAIPDPAPRSSHGP. Over residues 21 to 37 the composition is skewed to basic and acidic residues; sequence PDARHHEPRPGMTDHPD. 72-79 contacts ATP; it reads QKGGVGKT.

It belongs to the ParA family.

In terms of biological role, may play a role in septum formation. This is an uncharacterized protein from Mycobacterium tuberculosis (strain CDC 1551 / Oshkosh).